Consider the following 1128-residue polypeptide: Membrane-associated guanylate kinase, WW and PDZ domain-containing protein 3 (1128 aa).

In terms of domain architecture, PDZ 1 spans 22–108; sequence WGGPAGPDPE…PVRLKTVRPG (87 aa). Positions 116 to 290 constitute a Guanylate kinase-like domain; it reads RHYLSLQFQK…SMDFRNYMSR (175 aa). 123–130 lines the ATP pocket; sequence FQKGSIDH. Residues 184 to 276 form a disordered region; sequence TYDGNFYGTP…DWMKPVPSYN (93 aa). The segment covering 193-204 has biased composition (pro residues); the sequence is PKPPAEPSPFQP. The segment covering 238–247 has biased composition (acidic residues); sequence LPEDEEEEEK. Residues 257–267 are compositionally biased toward basic and acidic residues; the sequence is ENKEKHSDSSD. WW domains lie at 295-328 and 341-374; these read EPLP…DPRL and GELP…NPVL. PDZ domains follow at residues 412 to 494 and 581 to 657; these read RTSL…TLCR and TIPL…LILR. Positions 658 to 688 are disordered; it reads GGPPSPTKTGKMKDKQESSGSLEALSDAIPQ. 2 PDZ domains span residues 728-810 and 852-939; these read DVFL…TVRR and DVCL…VAEE. Disordered regions lie at residues 939–985 and 999–1018; these read EEHR…GKEV and LAQP…SQAQ. 2 stretches are compositionally biased toward polar residues: residues 946-956 and 965-974; these read SGTNSAKQSPA and AQSSASSTDR. Residues 1024 to 1106 form the PDZ 6 domain; the sequence is PVELERGPRG…KVLLLLRPGT (83 aa).

It belongs to the MAGUK family.

It localises to the cell membrane. It is found in the cell junction. Its subcellular location is the tight junction. Functionally, acts as a scaffolding protein at cell-cell junctions, thereby regulating various cellular and signaling processes. The polypeptide is Membrane-associated guanylate kinase, WW and PDZ domain-containing protein 3 (MAGI3) (Gallus gallus (Chicken)).